We begin with the raw amino-acid sequence, 406 residues long: Renin (406 aa).

An N-terminal signal peptide occupies residues 1–23 (MDGWRRMPRWGLLLLLWGSCTFG). A propeptide spans 24–66 (LPTDTTTFKRIFLKRMPSIRESLKERGVDMARLGPEWSQPMKR) (activation peptide). N-linked (GlcNAc...) asparagine glycosylation is present at Asn-71. One can recognise a Peptidase A1 domain in the interval 86–403 (YYGEIGIGTP…DRRNNRIGFA (318 aa)). Asp-104 is a catalytic residue. A disulfide bridge connects residues Cys-117 and Cys-124. Asn-141 is a glycosylation site (N-linked (GlcNAc...) asparagine). A disulfide bridge links Cys-283 with Cys-287. Asp-292 is a catalytic residue. A disulfide bridge links Cys-325 with Cys-362.

This sequence belongs to the peptidase A1 family. In terms of assembly, interacts with ATP6AP2.

It localises to the secreted. The protein localises to the membrane. It catalyses the reaction Cleavage of Leu-|-Xaa bond in angiotensinogen to generate angiotensin I.. With respect to regulation, interaction with ATP6AP2 results in a 5-fold increased efficiency in angiotensinogen processing. Its function is as follows. Renin is a highly specific endopeptidase, whose only known function is to generate angiotensin I from angiotensinogen in the plasma, initiating a cascade of reactions that produce an elevation of blood pressure and increased sodium retention by the kidney. This is Renin (REN) from Macaca fascicularis (Crab-eating macaque).